A 188-amino-acid chain; its full sequence is dCTP deaminase, dUMP-forming (188 aa).

Residues 101-106 (KSSLGR), Asp119, 127-129 (TLE), Gln148, Tyr162, and Gln174 each bind dCTP. The active-site Proton donor/acceptor is the Glu129.

This sequence belongs to the dCTP deaminase family. As to quaternary structure, homotrimer.

The enzyme catalyses dCTP + 2 H2O = dUMP + NH4(+) + diphosphate. It participates in pyrimidine metabolism; dUMP biosynthesis; dUMP from dCTP: step 1/1. Its function is as follows. Bifunctional enzyme that catalyzes both the deamination of dCTP to dUTP and the hydrolysis of dUTP to dUMP without releasing the toxic dUTP intermediate. The sequence is that of dCTP deaminase, dUMP-forming from Corynebacterium jeikeium (strain K411).